Consider the following 124-residue polypeptide: Small ribosomal subunit protein uS12 (124 aa).

Asp-89 carries the post-translational modification 3-methylthioaspartic acid. Positions Asp-103–Ser-124 are disordered. Basic residues predominate over residues Gln-108–Ser-124.

It belongs to the universal ribosomal protein uS12 family. In terms of assembly, part of the 30S ribosomal subunit. Contacts proteins S8 and S17. May interact with IF1 in the 30S initiation complex.

In terms of biological role, with S4 and S5 plays an important role in translational accuracy. Functionally, interacts with and stabilizes bases of the 16S rRNA that are involved in tRNA selection in the A site and with the mRNA backbone. Located at the interface of the 30S and 50S subunits, it traverses the body of the 30S subunit contacting proteins on the other side and probably holding the rRNA structure together. The combined cluster of proteins S8, S12 and S17 appears to hold together the shoulder and platform of the 30S subunit. In Methylococcus capsulatus (strain ATCC 33009 / NCIMB 11132 / Bath), this protein is Small ribosomal subunit protein uS12.